The sequence spans 631 residues: MSTTTLTRREQRAKAQHFIDTLEGTAFPNSKRIYVTGSQHDIRVPMREIQLSPTLIGGSKDNPQFEENEAVPVYDTSGPYGDPEVAINVQQGLAKLRQPWIDARNDSEELDDRSSAYTRERLADDGLDDLRFTGLLTPKRAKAGKRVTQLHYARQGIVTPEMEFIAIRENMGRERIRSEVLRHQHPGMNFGARLPENITPEFVRDEVAAGRAIIPANINHPESEPMIIGRNFLVKVNANIGNSAVTSSIEEEVEKLVWSTRWGADTVMDLSTGRYIHETREWILRNSPVPIGTVPIYQALEKVNGIAEDLTWEAFRDTLLEQAEQGVDYFTIHAGVLLRYVPMTAKRLTGIVSRGGSIMAKWCLSHHKENFLFEHFREICEICAAYDVSLSLGDGLRPGSIQDANDEAQFSELHTLGELTKIAWEYDVQVMIEGPGHVPMHMIQRNMTEELESCHEAPFYTLGPLTTDIAPGYDHFTSGIGAAMIGWFGCAMLCYVTPKEHLGLPNKEDVKQGLITYKIAAHAADLAKGHPGAQIRDNAMSKARFEFRWEDQFNLALDPFTARAYHDETLPQESGKVAHFCSMCGPKFCSMKISQGVRDYAAAQAIEVGMADMSENFRAKGGEIYLKREEA.

Residues N239, M268, Y297, H333, 353–355 (SRG), 394–397 (DGLR), and E433 each bind substrate. Residue H437 coordinates Zn(2+). Y460 is a substrate binding site. A Zn(2+)-binding site is contributed by H501. Positions 581, 584, and 589 each coordinate [4Fe-4S] cluster.

Belongs to the ThiC family. In terms of assembly, homodimer. [4Fe-4S] cluster serves as cofactor.

The catalysed reaction is 5-amino-1-(5-phospho-beta-D-ribosyl)imidazole + S-adenosyl-L-methionine = 4-amino-2-methyl-5-(phosphooxymethyl)pyrimidine + CO + 5'-deoxyadenosine + formate + L-methionine + 3 H(+). It functions in the pathway cofactor biosynthesis; thiamine diphosphate biosynthesis. Functionally, catalyzes the synthesis of the hydroxymethylpyrimidine phosphate (HMP-P) moiety of thiamine from aminoimidazole ribotide (AIR) in a radical S-adenosyl-L-methionine (SAM)-dependent reaction. This Salmonella dublin (strain CT_02021853) protein is Phosphomethylpyrimidine synthase.